A 136-amino-acid polypeptide reads, in one-letter code: Ribosome-binding factor A (136 aa).

The protein belongs to the RbfA family. As to quaternary structure, monomer. Binds 30S ribosomal subunits, but not 50S ribosomal subunits or 70S ribosomes.

The protein localises to the cytoplasm. Functionally, one of several proteins that assist in the late maturation steps of the functional core of the 30S ribosomal subunit. Associates with free 30S ribosomal subunits (but not with 30S subunits that are part of 70S ribosomes or polysomes). Required for efficient processing of 16S rRNA. May interact with the 5'-terminal helix region of 16S rRNA. The polypeptide is Ribosome-binding factor A (Serratia proteamaculans (strain 568)).